The chain runs to 386 residues: MSVIKMTDLDLAGKRVFIRADLNVPVKDGKVTSDARIRATIPTLKLALEKGAKVMVTSHLGRPTEGEFTPEDSLQPVVDYLKNAGFNVRLEQDYLNGVDVKDGEIVVLENVRINKGEKKNDPELGKKYAALCDVFVMDAFGTAHRAQASTYGVAEFAPIACAGPLLAAELDALGKALKEPARPMVAIVGGSKVSTKLEVLNSLSKIADQIIVGGGIANTFIAAAGHNVGKSLYEADLMPVAKELAANTDIPVPVDVRVGLEFSETAAATEKAVNEVKDDESIFDIGDKSAEQLAEIIKNAKTVLWNGPVGVFEFPHFRKGTEIISHAIANSDAFSIAGGGDTLAAIDLFGIADKISYISTGGGAFLEFVEGKVLPAVEILEKRAKN.

Residues 21–23 (DLN), Arg-36, 59–62 (HLGR), Arg-112, and Arg-145 each bind substrate. Residues Lys-196, Glu-313, and 339 to 342 (GGDT) each bind ATP.

This sequence belongs to the phosphoglycerate kinase family. As to quaternary structure, monomer.

It localises to the cytoplasm. The catalysed reaction is (2R)-3-phosphoglycerate + ATP = (2R)-3-phospho-glyceroyl phosphate + ADP. It functions in the pathway carbohydrate degradation; glycolysis; pyruvate from D-glyceraldehyde 3-phosphate: step 2/5. In Haemophilus influenzae (strain 86-028NP), this protein is Phosphoglycerate kinase.